Consider the following 495-residue polypeptide: Ribose import ATP-binding protein RbsA (495 aa).

2 consecutive ABC transporter domains span residues 7–242 (LEMR…VGRP) and 250–491 (ERDI…TGVN). 39–46 (GENGAGKS) contributes to the ATP binding site.

This sequence belongs to the ABC transporter superfamily. Ribose importer (TC 3.A.1.2.1) family. As to quaternary structure, the complex is composed of an ATP-binding protein (RbsA), two transmembrane proteins (RbsC) and a solute-binding protein (RbsB).

Its subcellular location is the cell inner membrane. It carries out the reaction D-ribose(out) + ATP + H2O = D-ribose(in) + ADP + phosphate + H(+). Part of the ABC transporter complex RbsABC involved in ribose import. Responsible for energy coupling to the transport system. This is Ribose import ATP-binding protein RbsA from Shigella dysenteriae serotype 1 (strain Sd197).